Reading from the N-terminus, the 394-residue chain is Elongation factor Tu (394 aa).

The 195-residue stretch at 10-204 (KPHVNVGTIG…ALDSYIPEPE (195 aa)) folds into the tr-type G domain. The tract at residues 19 to 26 (GHVDHGKT) is G1. 19–26 (GHVDHGKT) contacts GTP. T26 contacts Mg(2+). The tract at residues 60–64 (GITIA) is G2. The G3 stretch occupies residues 81 to 84 (DCPG). GTP is bound by residues 81-85 (DCPGH) and 136-139 (NKCD). The G4 stretch occupies residues 136–139 (NKCD). The G5 stretch occupies residues 174-176 (SAL).

This sequence belongs to the TRAFAC class translation factor GTPase superfamily. Classic translation factor GTPase family. EF-Tu/EF-1A subfamily. As to quaternary structure, monomer.

It localises to the cytoplasm. It carries out the reaction GTP + H2O = GDP + phosphate + H(+). In terms of biological role, GTP hydrolase that promotes the GTP-dependent binding of aminoacyl-tRNA to the A-site of ribosomes during protein biosynthesis. In Vibrio campbellii (strain ATCC BAA-1116), this protein is Elongation factor Tu.